Here is a 374-residue protein sequence, read N- to C-terminus: UDP-N-acetylglucosamine--N-acetylmuramyl-(pentapeptide) pyrophosphoryl-undecaprenol N-acetylglucosamine transferase (374 aa).

UDP-N-acetyl-alpha-D-glucosamine contacts are provided by residues 35-37, Asn-144, Arg-185, Ser-211, and Gln-305; that span reads TGG.

Belongs to the glycosyltransferase 28 family. MurG subfamily.

It localises to the cell inner membrane. The catalysed reaction is di-trans,octa-cis-undecaprenyl diphospho-N-acetyl-alpha-D-muramoyl-L-alanyl-D-glutamyl-meso-2,6-diaminopimeloyl-D-alanyl-D-alanine + UDP-N-acetyl-alpha-D-glucosamine = di-trans,octa-cis-undecaprenyl diphospho-[N-acetyl-alpha-D-glucosaminyl-(1-&gt;4)]-N-acetyl-alpha-D-muramoyl-L-alanyl-D-glutamyl-meso-2,6-diaminopimeloyl-D-alanyl-D-alanine + UDP + H(+). It participates in cell wall biogenesis; peptidoglycan biosynthesis. Functionally, cell wall formation. Catalyzes the transfer of a GlcNAc subunit on undecaprenyl-pyrophosphoryl-MurNAc-pentapeptide (lipid intermediate I) to form undecaprenyl-pyrophosphoryl-MurNAc-(pentapeptide)GlcNAc (lipid intermediate II). In Trichodesmium erythraeum (strain IMS101), this protein is UDP-N-acetylglucosamine--N-acetylmuramyl-(pentapeptide) pyrophosphoryl-undecaprenol N-acetylglucosamine transferase.